The primary structure comprises 1362 residues: Mediator of RNA polymerase II transcription subunit 12 (1362 aa).

A disordered region spans residues 31–51 (LRPPDDIHPLVDPARIGDSVY).

The protein belongs to the Mediator complex subunit 12 family. As to quaternary structure, component of the SRB8-11 complex, which itself associates with the Mediator complex.

It localises to the nucleus. In terms of biological role, component of the SRB8-11 complex. The SRB8-11 complex is a regulatory module of the Mediator complex which is itself involved in regulation of basal and activated RNA polymerase II-dependent transcription. The SRB8-11 complex may be involved in the transcriptional repression of a subset of genes regulated by Mediator. It may inhibit the association of the Mediator complex with RNA polymerase II to form the holoenzyme complex. This is Mediator of RNA polymerase II transcription subunit 12 (SRB8) from Yarrowia lipolytica (strain CLIB 122 / E 150) (Yeast).